The chain runs to 468 residues: Ribulose bisphosphate carboxylase large chain (468 aa).

N6,N6,N6-trimethyllysine is present on Lys-5. Residues Asn-114 and Thr-164 each contribute to the substrate site. The Proton acceptor role is filled by Lys-166. Lys-168 contributes to the substrate binding site. Mg(2+)-binding residues include Lys-192, Asp-194, and Glu-195. An N6-carboxylysine modification is found at Lys-192. His-285 functions as the Proton acceptor in the catalytic mechanism. Residues Arg-286, His-318, and Ser-370 each coordinate substrate.

Belongs to the RuBisCO large chain family. Type I subfamily. Heterohexadecamer of 8 large chains and 8 small chains; disulfide-linked. The disulfide link is formed within the large subunit homodimers. It depends on Mg(2+) as a cofactor. The disulfide bond which can form in the large chain dimeric partners within the hexadecamer appears to be associated with oxidative stress and protein turnover.

The protein localises to the plastid. Its subcellular location is the chloroplast. The catalysed reaction is 2 (2R)-3-phosphoglycerate + 2 H(+) = D-ribulose 1,5-bisphosphate + CO2 + H2O. It catalyses the reaction D-ribulose 1,5-bisphosphate + O2 = 2-phosphoglycolate + (2R)-3-phosphoglycerate + 2 H(+). RuBisCO catalyzes two reactions: the carboxylation of D-ribulose 1,5-bisphosphate, the primary event in carbon dioxide fixation, as well as the oxidative fragmentation of the pentose substrate in the photorespiration process. Both reactions occur simultaneously and in competition at the same active site. The polypeptide is Ribulose bisphosphate carboxylase large chain (Tecoma stans (Yellow bells)).